The primary structure comprises 883 residues: Bifunctional heparan sulfate N-deacetylase/N-sulfotransferase 2 (883 aa).

The Cytoplasmic segment spans residues 1–18 (MLQLWKVVRPARQLELHR). The chain crosses the membrane as a helical; Signal-anchor for type II membrane protein span at residues 19–39 (LILLLIGFSLVSMGFLAYYVS). At 40–883 (TSPKAKEPLP…REELQHSSVG (844 aa)) the chain is on the lumenal side. The tract at residues 41 to 597 (SPKAKEPLPL…KRHKDIWSKE (557 aa)) is heparan sulfate N-deacetylase 2. The disordered stretch occupies residues 49-82 (PLPLGDCSSSGAAGPGPARPPVPPRPQRPPETTR). Residues 65–77 (PARPPVPPRPQRP) show a composition bias toward pro residues. N-linked (GlcNAc...) asparagine glycosylation is found at N233, N350, and N400. Positions 598 to 883 (KTCDRLPKFL…REELQHSSVG (286 aa)) are heparan sulfate N-sulfotransferase 2. The active-site For sulfotransferase activity is the K613. Position 613-617 (613-617 (KTGTT)) interacts with 3'-phosphoadenylyl sulfate. A glycan (N-linked (GlcNAc...) asparagine) is linked at N666. S711 provides a ligand contact to 3'-phosphoadenylyl sulfate. N726 and N802 each carry an N-linked (GlcNAc...) asparagine glycan. C817 and C827 form a disulfide bridge. 3'-phosphoadenylyl sulfate is bound at residue 832–836 (KGRRY).

It belongs to the sulfotransferase 1 family. NDST subfamily. Monomer. As to expression, widely expressed in adult and throughout development.

It localises to the golgi apparatus membrane. The enzyme catalyses alpha-D-glucosaminyl-[heparan sulfate](n) + 3'-phosphoadenylyl sulfate = N-sulfo-alpha-D-glucosaminyl-[heparan sulfate](n) + adenosine 3',5'-bisphosphate + 2 H(+). It participates in glycan metabolism; heparan sulfate biosynthesis. The protein operates within glycan metabolism; heparin biosynthesis. Its function is as follows. Essential bifunctional enzyme that catalyzes both the N-deacetylation and the N-sulfation of glucosamine (GlcNAc) of the glycosaminoglycan in heparan sulfate. Modifies the GlcNAc-GlcA disaccharide repeating sugar backbone to make N-sulfated heparosan, a prerequisite substrate for later modifications in heparin biosynthesis. Plays a role in determining the extent and pattern of sulfation of heparan sulfate. Required for the exosomal release of SDCBP, CD63 and syndecan. The polypeptide is Bifunctional heparan sulfate N-deacetylase/N-sulfotransferase 2 (Ndst2) (Mus musculus (Mouse)).